Reading from the N-terminus, the 608-residue chain is Developmental regulatory protein wetA (608 aa).

Disordered regions lie at residues 54–88, 102–125, 146–186, 202–226, 309–352, 447–544, and 556–576; these read ADHH…GVST, VDAT…VDPR, VSMS…MTRK, SKLR…NPPR, WPHQ…HAVP, AQTY…GDIG, and LMTG…EREA. Composition is skewed to low complexity over residues 77 to 88, 107 to 119, and 163 to 175; these read ESTASASSGVST, PSQP…PGAS, and SSPG…SQPS. Over residues 313 to 338 the composition is skewed to basic residues; sequence QHPHPHPHPHHPQAHTHPHPHPHPHP. Low complexity-rich tracts occupy residues 339 to 350 and 502 to 517; these read HQQAVAGHPQHA and SSNG…SGRG.

Belongs to the wetA family.

In terms of biological role, abaA and wetA are pivotal regulators of conidiophore development and conidium maturation. They act individually and together to regulate their own expression and that of numerous other sporulation-specific genes. Functions to maintain conidial dormancy by suppressing microcycle conidiation. This Gibberella zeae (strain ATCC MYA-4620 / CBS 123657 / FGSC 9075 / NRRL 31084 / PH-1) (Wheat head blight fungus) protein is Developmental regulatory protein wetA.